The sequence spans 209 residues: uncharacterized protein (209 aa).

A compositionally biased stretch (basic and acidic residues) spans 1 to 15 (MHRIDTKTAQKDKFG). The segment at 1–34 (MHRIDTKTAQKDKFGAGKNGFTRGNPQTGTPATD) is disordered. The segment covering 22–31 (TRGNPQTGTP) has biased composition (polar residues).

To E.coli YfdL and M.jannaschii MJ0347.

This is an uncharacterized protein from Escherichia coli (strain K12).